The chain runs to 701 residues: Polyribonucleotide nucleotidyltransferase (701 aa).

2 residues coordinate Mg(2+): D489 and D495. Residues 556–615 (PRIHTMKIHPDKIREVIGSGGKVIRSITEETGCAIDIEDDGTIRIASSDQASAEQAVKII) form the KH domain. The S1 motif domain occupies 625–693 (GQVYEGKVVR…RQGRVKLTMK (69 aa)).

The protein belongs to the polyribonucleotide nucleotidyltransferase family. It depends on Mg(2+) as a cofactor.

It is found in the cytoplasm. The enzyme catalyses RNA(n+1) + phosphate = RNA(n) + a ribonucleoside 5'-diphosphate. Functionally, involved in mRNA degradation. Catalyzes the phosphorolysis of single-stranded polyribonucleotides processively in the 3'- to 5'-direction. The chain is Polyribonucleotide nucleotidyltransferase from Magnetococcus marinus (strain ATCC BAA-1437 / JCM 17883 / MC-1).